The following is a 389-amino-acid chain: Probable acyl-CoA dehydrogenase fadE25 (389 aa).

It belongs to the acyl-CoA dehydrogenase family. The cofactor is FAD.

It carries out the reaction a 2,3-saturated acyl-CoA + A = a 2,3-dehydroacyl-CoA + AH2. This chain is Probable acyl-CoA dehydrogenase fadE25 (fadE25), found in Mycobacterium leprae (strain TN).